Reading from the N-terminus, the 1159-residue chain is Ferroxidase HEPHL1 (1159 aa).

Residues 1–24 (MPRKQPAGCIFLLTFLGLSGLVGT) form the signal peptide. 6 consecutive Plastocyanin-like domains span residues 25-207 (VTRT…LLVC), 218-366 (TRND…VDNC), 379-561 (QRRY…LLVC), 571-719 (TQKG…VSSC), 731-907 (MIRT…LITC), and 915-1092 (KGRR…VPSN). Topologically, residues 25-1114 (VTRTYYIGIV…KNLGPTGAKA (1090 aa)) are extracellular. Cu cation contacts are provided by His-127 and His-129. A glycan (N-linked (GlcNAc...) asparagine) is linked at Asn-161. Residues Cys-181 and Cys-207 are joined by a disulfide bond. Residues His-187 and His-189 each coordinate Cu cation. Asn-236 is a glycosylation site (N-linked (GlcNAc...) asparagine). Residues Cys-285 and Cys-366 are joined by a disulfide bond. Residues His-304, Cys-347, and His-352 each coordinate Cu cation. Asn-407 is a glycosylation site (N-linked (GlcNAc...) asparagine). A disulfide bond links Cys-535 and Cys-561. N-linked (GlcNAc...) asparagine glycosylation is present at Asn-589. Cys-638 and Cys-719 are disulfide-bonded. The Cu cation site is built by His-657, Cys-700, His-705, and Met-710. N-linked (GlcNAc...) asparagine glycosylation occurs at Asn-772. The cysteines at positions 881 and 907 are disulfide-linked. Residue Asn-935 is glycosylated (N-linked (GlcNAc...) asparagine). The Cu cation site is built by His-1003, His-1006, His-1008, His-1048, Cys-1049, His-1050, His-1054, and Met-1059. Residues 1115–1135 (ALVILFIIGLLLLITTVILSL) traverse the membrane as a helical segment. The Cytoplasmic portion of the chain corresponds to 1136–1159 (RLCSAMKQTDYQQVQSCALPTDAL).

It belongs to the multicopper oxidase family. Cu cation serves as cofactor.

The protein resides in the membrane. It catalyses the reaction 4 Fe(2+) + O2 + 4 H(+) = 4 Fe(3+) + 2 H2O. Functionally, is a copper-binding glycoprotein with ferroxidase activity. It oxidizes Fe(2+) to Fe(3+) without releasing radical oxygen species. May be involved in the regulation of intracellular iron content. The sequence is that of Ferroxidase HEPHL1 (HEPHL1) from Homo sapiens (Human).